Reading from the N-terminus, the 266-residue chain is Glutamate racemase (266 aa).

Substrate-binding positions include 9 to 10 and 41 to 42; these read DS and YG. Cys-73 (proton donor/acceptor) is an active-site residue. 74–75 contributes to the substrate binding site; sequence NT. Residue Cys-183 is the Proton donor/acceptor of the active site. Residue 184 to 185 coordinates substrate; the sequence is TH.

This sequence belongs to the aspartate/glutamate racemases family.

The catalysed reaction is L-glutamate = D-glutamate. Its pathway is cell wall biogenesis; peptidoglycan biosynthesis. Functionally, provides the (R)-glutamate required for cell wall biosynthesis. In Shewanella woodyi (strain ATCC 51908 / MS32), this protein is Glutamate racemase.